The sequence spans 449 residues: XK-related protein 2 (449 aa).

Helical transmembrane passes span 35–55 (FSIL…LYMV), 68–88 (TYTF…LIFV), 98–118 (LSLF…EAMI), 174–194 (IQAF…SLIS), 204–224 (LMAF…MLAI), 241–261 (LCIT…LVLF), 269–289 (AVPF…VKFW), 306–326 (VGTL…NFSC), 357–377 (LVEN…VLLN), and 382–402 (LIAV…LLFF).

Belongs to the XK family.

It localises to the membrane. The sequence is that of XK-related protein 2 (Xkrx) from Mus musculus (Mouse).